Reading from the N-terminus, the 292-residue chain is Probable 2-(5''-triphosphoribosyl)-3'-dephosphocoenzyme-A synthase (292 aa).

This sequence belongs to the CitG/MdcB family.

It carries out the reaction 3'-dephospho-CoA + ATP = 2'-(5''-triphospho-alpha-D-ribosyl)-3'-dephospho-CoA + adenine. The polypeptide is Probable 2-(5''-triphosphoribosyl)-3'-dephosphocoenzyme-A synthase (Shigella sonnei (strain Ss046)).